The following is a 443-amino-acid chain: Probable glucomannan 4-beta-mannosyltransferase 11 (443 aa).

The active site involves aspartate 52. Residues aspartate 111 and aspartate 113 each contribute to the substrate site. Residue aspartate 205 is part of the active site. The next 4 helical transmembrane spans lie at 284–304 (IIVHFFTFFFYCFILPTSVFF), 321–341 (ITLFNAIATPRSFYLVIFWVL), 400–420 (EMMVGIYILCCASYNLVFGKT), and 421–441 (VLYIYLYMQALAFIIAGIGFI).

Belongs to the glycosyltransferase 2 family. Plant cellulose synthase-like A subfamily.

The protein localises to the golgi apparatus membrane. It catalyses the reaction GDP-mannose + (glucomannan)n = GDP + (glucomannan)n+1.. Probable mannan synthase which consists of a 4-beta-mannosyltransferase activity on mannan using GDP-mannose. The beta-1,4-mannan product is the backbone for galactomannan synthesis by galactomannan galactosyltransferase. Galactomannan is a noncellulosic polysaccharides of plant cell wall. The sequence is that of Probable glucomannan 4-beta-mannosyltransferase 11 from Arabidopsis thaliana (Mouse-ear cress).